A 122-amino-acid chain; its full sequence is Large ribosomal subunit protein uL14 (122 aa).

This sequence belongs to the universal ribosomal protein uL14 family. As to quaternary structure, part of the 50S ribosomal subunit. Forms a cluster with proteins L3 and L19. In the 70S ribosome, L14 and L19 interact and together make contacts with the 16S rRNA in bridges B5 and B8.

In terms of biological role, binds to 23S rRNA. Forms part of two intersubunit bridges in the 70S ribosome. The polypeptide is Large ribosomal subunit protein uL14 (Streptococcus equi subsp. equi (strain 4047)).